Consider the following 251-residue polypeptide: tRNA (guanine-N(7)-)-methyltransferase (251 aa).

S-adenosyl-L-methionine contacts are provided by E80, E105, D132, and D155. Residue D155 is part of the active site. Substrate-binding positions include K159, D191, and 228 to 231 (TKFE).

The protein belongs to the class I-like SAM-binding methyltransferase superfamily. TrmB family.

The enzyme catalyses guanosine(46) in tRNA + S-adenosyl-L-methionine = N(7)-methylguanosine(46) in tRNA + S-adenosyl-L-homocysteine. It functions in the pathway tRNA modification; N(7)-methylguanine-tRNA biosynthesis. Functionally, catalyzes the formation of N(7)-methylguanine at position 46 (m7G46) in tRNA. This Histophilus somni (strain 2336) (Haemophilus somnus) protein is tRNA (guanine-N(7)-)-methyltransferase.